Consider the following 411-residue polypeptide: G2/mitotic-specific cyclin cig2 (411 aa).

The short motif at 51–60 (RTVLSDVSNV) is the Destruction box element. The segment at 57–89 (VSNVGKNNADEKDTKKAKRSFDESNLSTNEEAD) is disordered. Positions 64 to 78 (NADEKDTKKAKRSFD) are enriched in basic and acidic residues. One can recognise a Cyclin N-terminal domain in the interval 139-265 (EIFEYIRKLD…MLNVLNFDLS (127 aa)). Residues 181–273 (SNFCLMPETL…LSYPSPLNFL (93 aa)) form an interaction with pop1 region.

Belongs to the cyclin family. Cyclin AB subfamily. Associates with cdc2, res2 and rum1. Interacts with pop1 only when phosphorylated. Post-translationally, phosphorylated.

Its subcellular location is the nucleus. The protein resides in the cytoplasm. The protein localises to the cytoskeleton. It localises to the microtubule organizing center. It is found in the spindle pole body. In terms of biological role, essential for the control of the cell cycle at the G2/M and G1/S (mitosis) transition. Interacts with the cdc2 protein kinase to form MPF. Interaction with res2 promotes the phosphorylation of res1 and inhibits MBF-dependent gene transcription. Forms an autoregulating feedback-inhibition loop with MBF which is important for normal regulation of the cell cycle. G2/M cyclins accumulate steadily during G2 and are abruptly destroyed at mitosis. Negatively regulates conjugation via interacting with cell cycle 'start' genes. Degraded by skp1, pop1 and pop2 in the G2 and M phases of the cell cycle. The polypeptide is G2/mitotic-specific cyclin cig2 (cig2) (Schizosaccharomyces pombe (strain 972 / ATCC 24843) (Fission yeast)).